We begin with the raw amino-acid sequence, 359 residues long: Glycerol-1-phosphate dehydrogenase [NAD(P)+] (359 aa).

Residues 107–111 (GRVID) and 129–132 (TAAS) each bind NAD(+). Position 134 (Asp134) interacts with substrate. Ser138 is a binding site for NAD(+). Asp181 contributes to the substrate binding site. The Zn(2+) site is built by Asp181 and His261. Residue His265 participates in substrate binding. His277 contributes to the Zn(2+) binding site.

Belongs to the glycerol-1-phosphate dehydrogenase family. Zn(2+) serves as cofactor.

It localises to the cytoplasm. It catalyses the reaction sn-glycerol 1-phosphate + NAD(+) = dihydroxyacetone phosphate + NADH + H(+). The catalysed reaction is sn-glycerol 1-phosphate + NADP(+) = dihydroxyacetone phosphate + NADPH + H(+). Its pathway is membrane lipid metabolism; glycerophospholipid metabolism. Catalyzes the NAD(P)H-dependent reduction of dihydroxyacetonephosphate (DHAP or glycerone phosphate) to glycerol 1-phosphate (G1P). The G1P thus generated is used as the glycerophosphate backbone of phospholipids in the cellular membranes of Archaea. The polypeptide is Glycerol-1-phosphate dehydrogenase [NAD(P)+] (Methanosphaerula palustris (strain ATCC BAA-1556 / DSM 19958 / E1-9c)).